The primary structure comprises 649 residues: Stress-70 protein, mitochondrial (649 aa).

The N-terminal 46 residues, 1-46, are a transit peptide targeting the mitochondrion; the sequence is MISASRAAAARLVGAAASRGPTAARHKDGWNGLSHEAFRIVSRRDY. The interaction with NFS1 stretch occupies residues 1–432; that stretch reads MISASRAAAA…IQGGVLAGDV (432 aa). Positions 63 and 64 each coordinate ADP. The nucleotide-binding domain (NBD) stretch occupies residues 63–431; it reads TNSCVAVMEG…AIQGGVLAGD (369 aa). An N6-acetyllysine modification is found at K76. Phosphothreonine is present on T87. An N6-acetyllysine; alternate mark is found at K135 and K138. K135 and K138 each carry N6-succinyllysine; alternate. K143 carries the post-translational modification N6-acetyllysine. An N6-acetyllysine; alternate modification is found at K206. K206 carries the post-translational modification N6-succinyllysine; alternate. K206 carries the post-translational modification N6-malonyllysine; alternate. 2 positions are modified to N6-acetyllysine: K234 and K288. K300 carries the N6-acetyllysine; alternate modification. K300 carries the N6-succinyllysine; alternate modification. Residues E313, K316, and S320 each coordinate ADP. K368 is modified (N6-succinyllysine). ADP-binding residues include G388 and R391. The residue at position 394 (K394) is an N6-succinyllysine. Position 408 is a phosphoserine (S408). The tract at residues 432–441 is interdomain linker; sequence VTDVLLLDVT. N6-acetyllysine; alternate occurs at positions 565, 598, and 638. 3 positions are modified to N6-succinyllysine; alternate: K565, K598, and K638.

This sequence belongs to the heat shock protein 70 family. As to quaternary structure, interacts strongly with the intermediate form of FXN and weakly with its mature form. Interacts with HSCB. Associates with the mitochondrial contact site and cristae organizing system (MICOS) complex, composed of at least MICOS10/MIC10, CHCHD3/MIC19, CHCHD6/MIC25, APOOL/MIC27, IMMT/MIC60, APOO/MIC23/MIC26 and QIL1/MIC13. This complex was also known under the names MINOS or MitOS complex. The MICOS complex associates with mitochondrial outer membrane proteins SAMM50, MTX1, MTX2 and DNAJC11, mitochondrial inner membrane protein TMEM11 and with HSPA9. Interacts with DNLZ, the interaction is required to prevent self-aggregation. Interacts with TESPA1. Interacts with PDPN. Interacts with NFU1, NFS1 and ISCU. Interacts with TP53; the interaction promotes TP53 degradation. Interacts (via SBD domain) with UBXN2A; the interaction with UBXN2A inhibits HSPA9/MOT-2 interaction with and degradation of TP53, thereby promotes TP53 translocation to the nucleus. Interacts with ITPR1 AND VDAC1; this interaction couples ITPR1 to VDAC1. Component of the TIM23 mitochondrial inner membrane pre-sequence translocase complex.

It localises to the mitochondrion. The protein resides in the nucleus. It is found in the nucleolus. Its subcellular location is the cytoplasm. The protein localises to the mitochondrion matrix. It carries out the reaction ATP + H2O = ADP + phosphate + H(+). The chaperone activity is regulated by ATP-induced allosteric coupling of the nucleotide-binding (NBD) and substrate-binding (SBD) domains. ATP binding in the NBD leads to a conformational change in the NBD, which is transferred through the interdomain linker (IDL) to the substrate-binding domain (SBD). This elicits a reduced substrate affinity and a faster substrate exchange rate. Upon hydrolysis of ATP to ADP, the protein undergoes a conformational change that increases its affinity for substrate proteins. It cycles through repeated phases of ATP hydrolysis and nucleotide exchange, facilitating repeated cycles of substrate binding and release. Functions in collaboration with co-chaperones. Functions with the co-chaperone, DNLZ, to maintain solubility and regulate ATP hydrolysis. Nucleotide exchange factors, GRPEL1 and GRPEL2, accelerate nucleotide exchange. Its function is as follows. Mitochondrial chaperone that plays a key role in mitochondrial protein import, folding, and assembly. Plays an essential role in the protein quality control system, the correct folding of proteins, the re-folding of misfolded proteins, and the targeting of proteins for subsequent degradation. These processes are achieved through cycles of ATP binding, ATP hydrolysis, and ADP release, mediated by co-chaperones. In mitochondria, it associates with the TIM (translocase of the inner membrane) protein complex to assist in the import and folding of mitochondrial proteins. Plays an important role in mitochondrial iron-sulfur cluster (ISC) biogenesis, interacts with and stabilizes ISC cluster assembly proteins FXN, NFU1, NFS1 and ISCU. Regulates erythropoiesis via stabilization of ISC assembly. Regulates mitochondrial calcium-dependent apoptosis by coupling two calcium channels, ITPR1 and VDAC1, at the mitochondria-associated endoplasmic reticulum (ER) membrane to facilitate calcium transport from the ER lumen to the mitochondria intermembrane space, providing calcium for the downstream calcium channel MCU, which releases it into the mitochondrial matrix. Although primarily located in the mitochondria, it is also found in other cellular compartments. In the cytosol, it associates with proteins involved in signaling, apoptosis, or senescence. It may play a role in cell cycle regulation via its interaction with and promotion of degradation of TP53. May play a role in the control of cell proliferation and cellular aging. Protects against reactive oxygen species (ROS). Extracellular HSPA9 plays a cytoprotective role by preventing cell lysis following immune attack by the membrane attack complex by disrupting formation of the complex. This Canis lupus familiaris (Dog) protein is Stress-70 protein, mitochondrial.